Consider the following 381-residue polypeptide: Metallophosphoesterase 1 (381 aa).

Residues Leu15–Ile35 form a helical membrane-spanning segment. A divalent metal cation contacts are provided by Asp59, Asp101, Asn139, His234, His288, and His290. A helical transmembrane segment spans residues Thr341–Leu361. The short motif at Lys377–Leu381 is the Di-lysine motif element.

The protein belongs to the metallophosphoesterase superfamily. MPPE1 family. It depends on Mn(2+) as a cofactor.

It is found in the endoplasmic reticulum-Golgi intermediate compartment membrane. Metallophosphoesterase that catalyzes the removal of a side-chain ethanolamine-phosphate (EtNP) from the second mannose of the GPI-anchor protein intermediate. Participates in the glycan remodeling steps of GPI-anchor maturation to allow an efficient transport of GPI-anchor proteins from the endoplasmic reticulum to the Golgi. The chain is Metallophosphoesterase 1 from Danio rerio (Zebrafish).